The chain runs to 356 residues: Thrombomodulin (356 aa).

Topologically, residues 1–296 are extracellular; sequence RGARGETEGR…SPAPAGPLHS (296 aa). 2 consecutive EGF-like domains span residues 17–57 and 60–98; these read GAWA…RSCG and AEHP…HRCE. 18 cysteine pairs are disulfide-bonded: Cys21–Cys32, Cys28–Cys41, Cys43–Cys56, Cys64–Cys72, Cys68–Cys82, Cys84–Cys97, Cys103–Cys114, Cys110–Cys123, Cys125–Cys136, Cys143–Cys152, Cys148–Cys162, Cys164–Cys178, Cys182–Cys191, Cys187–Cys199, Cys201–Cys213, Cys219–Cys228, Cys224–Cys237, and Cys239–Cys253. Residues 99-137 form the EGF-like 3; calcium-binding domain; the sequence is DVDDCAQLPSPCPQRCVNTEGGFQCHCDTGYELVDGECV. EGF-like domains follow at residues 139–179 and 178–214; these read PVDP…HKCQ and CQMF…STCT. An EGF-like 6; calcium-binding domain is found at 215–254; it reads DINECDTNICPGQCHNLPGTYECICGPDSALSGQIGIDCD. Residues 255–290 are disordered; that stretch reads PTQVNEERGTPEDYGGSGEPPVSPTPGATARPSPAP. A glycan (O-linked (Xyl...) (chondroitin sulfate) serine) is linked at Ser271. The helical transmembrane segment at 297–320 threads the bilayer; sequence GVLVGISIASLSLVVALLALLCHL. At 321–356 the chain is on the cytoplasmic side; that stretch reads RKKQGASRGELEYKCGVPAKELMLQQVKTERTPQKL.

As to quaternary structure, interacts with ITGAL, ITGAM and ITGB2. Interacts with thrombin/F2; this interaction switches the specificity of thrombin from a procoagulant to an anticoagulant and antifibrinolytic protease. Interacts with ANGP1 and ANGP2; these interactions significantly inhibit the generation of activated PC and TAFIa/CPB2 by the thrombin/thrombomodulin complex. Interacts with PF4; this interaction enhances generation of activated protein C. Interacts with HMGB1; this interaction inhibits HMGB1 inflammatory activity. As to expression, endothelial cells are unique in synthesizing thrombomodulin.

It localises to the membrane. Functionally, endothelial cell receptor that plays a critical role in regulating several physiological processes including hemostasis, coagulation, fibrinolysis, inflammation, and angiogenesis. Acts as a cofactor for thrombin activation of protein C/PROC on the surface of vascular endothelial cells leading to initiation of the activated protein C anticoagulant pathway. Also accelerates the activation of the plasma carboxypeptidase B2/CPB2, which catalyzes removal of C-terminal basic amino acids from its substrates including kinins or anaphylatoxins leading to fibrinolysis inhibition. Plays critical protective roles in changing the cleavage specificity of protease-activated receptor 1/PAR1, inhibiting endothelial cell permeability and inflammation. Suppresses inflammation distinctly from its anticoagulant cofactor activity by sequestering HMGB1 thereby preventing it from engaging cellular receptors such as RAGE and contributing to the inflammatory response. The polypeptide is Thrombomodulin (THBD) (Bos taurus (Bovine)).